Consider the following 136-residue polypeptide: Protein NrdI (136 aa).

The protein belongs to the NrdI family.

Probably involved in ribonucleotide reductase function. This is Protein NrdI from Salmonella dublin (strain CT_02021853).